Reading from the N-terminus, the 223-residue chain is MASKLLRAVILGPPGSGKGTVCERIAQNFGLQHLSSGHLLRENLKTGTEVGDVAKQYLEKGLLVPDHVITRLMMSELETRSAQHWLLDGFPRTLVQAEALDGICDVDLVISLNIPFETLKDRLSRRWIHPSSGRVYNLDFNPPQVQGIDDITGEPLVQQEDDKPEAVAARLRRYKDAAKPVIELYKSRGVLHQFSGTETNRIWPYVYTLFSNKITPIQSKEAY.

An a ribonucleoside 5'-triphosphate-binding site is contributed by 15-20; sequence GSGKGT. The NMP stretch occupies residues 35-64; that stretch reads SSGHLLRENLKTGTEVGDVAKQYLEKGLLV. Residues serine 36 and arginine 41 each contribute to the AMP site. Lysine 60 carries the post-translational modification N6-succinyllysine. AMP contacts are provided by residues 62 to 64, 89 to 92, and glutamine 96; these read LLV and GFPR. Residues 125-162 form an LID region; sequence RRWIHPSSGRVYNLDFNPPQVQGIDDITGEPLVQQEDD. A ribonucleoside 5'-triphosphate-binding positions include arginine 126 and 135-136; that span reads VY. Arginine 170 contacts AMP. Lysine 175 is subject to N6-acetyllysine. An N6-acetyllysine; alternate mark is found at lysine 179 and lysine 186. N6-succinyllysine; alternate occurs at positions 179 and 186. Residue threonine 199 participates in a ribonucleoside 5'-triphosphate binding.

This sequence belongs to the adenylate kinase family. AK3 subfamily. Monomer. Interacts with SLC25A5/ANT2. In terms of tissue distribution, expressed in kidney, liver, stomach, brain, spinal cord, heart, ovary, oviduct, colon, jejunum, ileum and testis (at protein level). In the brain, expressed in the pyramidal cells of the cerebrum and glial cells in the cerebellum (at protein level). In the heart, expressed by myocytes (at protein level). In the kidney, expressed in the proximal to distal tubule in the cortex and the outer and inner zones of the medulla (at protein level). In the stomach, expressed in stratified squamous epithelia in the forestomach and in the gastric pit and mucus producing cells of the glandular stomach (at protein level). Expressed in epithelial cells of the jejunum, ileum, and colon (at protein level). In the testis, expressed by spermatocytes (at protein level). In the ovaries, expressed by oocytes, follicular epithelial cells, and corpus luteum cells (at protein level). In the oviduct, expressed in the epithelia of the isthmus and the ciliated cells of the ampulla (at protein level). Expressed in the pyramidal cells in the hippocampus.

It is found in the mitochondrion matrix. It carries out the reaction a ribonucleoside 5'-phosphate + ATP = a ribonucleoside 5'-diphosphate + ADP. The catalysed reaction is AMP + ATP = 2 ADP. It catalyses the reaction GTP + AMP = GDP + ADP. The enzyme catalyses CMP + ATP = CDP + ADP. It carries out the reaction GTP + CMP = CDP + GDP. The catalysed reaction is dAMP + ATP = dADP + ADP. It catalyses the reaction dCMP + ATP = dCDP + ADP. The enzyme catalyses a 2'-deoxyribonucleoside 5'-diphosphate + ATP = a 2'-deoxyribonucleoside 5'-triphosphate + ADP. It carries out the reaction a ribonucleoside 5'-diphosphate + ATP = a ribonucleoside 5'-triphosphate + ADP. The catalysed reaction is GDP + ATP = GTP + ADP. It catalyses the reaction CDP + GTP = CTP + GDP. The enzyme catalyses CDP + ATP = CTP + ADP. It carries out the reaction UDP + ATP = UTP + ADP. The catalysed reaction is GTP + UDP = UTP + GDP. It catalyses the reaction dADP + GTP = dATP + GDP. The enzyme catalyses dCDP + GTP = dCTP + GDP. It carries out the reaction dCDP + ATP = dCTP + ADP. The catalysed reaction is dGDP + ATP = dGTP + ADP. It catalyses the reaction dTDP + GTP = dTTP + GDP. The enzyme catalyses dTDP + ATP = dTTP + ADP. Broad-specificity mitochondrial nucleoside phosphate kinase involved in cellular nucleotide homeostasis by catalyzing nucleoside-phosphate interconversions. Similar to other adenylate kinases, preferentially catalyzes the phosphorylation of the nucleoside monophosphate AMP with ATP as phosphate donor to produce ADP. Phosphorylates only AMP when using GTP as phosphate donor. In vitro, can also catalyze the phosphorylation of CMP, dAMP and dCMP and use GTP as an alternate phosphate donor. Moreover, exhibits a diphosphate kinase activity, producing ATP, CTP, GTP, UTP, TTP, dATP, dCTP and dGTP from the corresponding diphosphate substrates with either ATP or GTP as phosphate donors. Plays a role in controlling cellular ATP levels by regulating phosphorylation and activation of the energy sensor protein kinase AMPK. Plays a protective role in the cellular response to oxidative stress. This chain is Adenylate kinase 4, mitochondrial, found in Mus musculus (Mouse).